The primary structure comprises 108 residues: NADH dehydrogenase [ubiquinone] flavoprotein 3, mitochondrial (108 aa).

Residues 1–34 (MAAPCLLRQGRAGALKTMLQEAQVFRGLASTVSL) constitute a mitochondrion transit peptide. The disordered stretch occupies residues 33–72 (SLSAESGKSEKGQPQNSKKQSPPKKPAPVPAEPFDNTTYK). Serine 105 is subject to Phosphoserine.

The protein belongs to the complex I NDUFV3 subunit family. In terms of assembly, complex I is composed of 45 different subunits. This is a component of the flavoprotein-sulfur (FP) fragment of the enzyme.

The protein localises to the mitochondrion inner membrane. In terms of biological role, accessory subunit of the mitochondrial membrane respiratory chain NADH dehydrogenase (Complex I), that is believed not to be involved in catalysis. Complex I functions in the transfer of electrons from NADH to the respiratory chain. The immediate electron acceptor for the enzyme is believed to be ubiquinone. May be the terminally assembled subunit of Complex I. This chain is NADH dehydrogenase [ubiquinone] flavoprotein 3, mitochondrial (NDUFV3), found in Homo sapiens (Human).